The primary structure comprises 334 residues: Fructose-1,6-bisphosphatase class 1 (334 aa).

Mg(2+) is bound by residues Glu92, Asp114, Leu116, and Asp117. Substrate contacts are provided by residues 117–120 (DGSS) and Asn209. Glu281 serves as a coordination point for Mg(2+).

This sequence belongs to the FBPase class 1 family. Homotetramer. The cofactor is Mg(2+).

The protein localises to the cytoplasm. It catalyses the reaction beta-D-fructose 1,6-bisphosphate + H2O = beta-D-fructose 6-phosphate + phosphate. It functions in the pathway carbohydrate biosynthesis; gluconeogenesis. The chain is Fructose-1,6-bisphosphatase class 1 from Nitrosomonas eutropha (strain DSM 101675 / C91 / Nm57).